The following is a 181-amino-acid chain: FMN reductase (NADH) RutF (181 aa).

Belongs to the non-flavoprotein flavin reductase family. RutF subfamily.

It catalyses the reaction FMNH2 + NAD(+) = FMN + NADH + 2 H(+). In terms of biological role, catalyzes the reduction of FMN to FMNH2 which is used to reduce pyrimidine by RutA via the Rut pathway. This chain is FMN reductase (NADH) RutF, found in Ancylobacter novellus (strain ATCC 8093 / DSM 506 / JCM 20403 / CCM 1077 / IAM 12100 / NBRC 12443 / NCIMB 10456) (Starkeya novella).